The chain runs to 178 residues: CDP-archaeol synthase (178 aa).

A run of 4 helical transmembrane segments spans residues Leu3–Val23, Phe56–Tyr76, Ile91–Ile111, and Leu136–Ile156.

It belongs to the CDP-archaeol synthase family. The cofactor is Mg(2+).

It is found in the cell membrane. It catalyses the reaction 2,3-bis-O-(geranylgeranyl)-sn-glycerol 1-phosphate + CTP + H(+) = CDP-2,3-bis-O-(geranylgeranyl)-sn-glycerol + diphosphate. It functions in the pathway membrane lipid metabolism; glycerophospholipid metabolism. In terms of biological role, catalyzes the formation of CDP-2,3-bis-(O-geranylgeranyl)-sn-glycerol (CDP-archaeol) from 2,3-bis-(O-geranylgeranyl)-sn-glycerol 1-phosphate (DGGGP) and CTP. This reaction is the third ether-bond-formation step in the biosynthesis of archaeal membrane lipids. In Methanococcus maripaludis (strain C5 / ATCC BAA-1333), this protein is CDP-archaeol synthase.